A 90-amino-acid polypeptide reads, in one-letter code: MSRTIFCTFLKKEAIGQDFQIYPGDIGRRIYDDISQEAWSLWLNKQTMLINEKKLSMIHHEDRALLEREMIQFLFEGKDVHVSGYIPPKD.

Belongs to the Fe(2+)-trafficking protein family. Monomer.

Its function is as follows. Could be a mediator in iron transactions between iron acquisition and iron-requiring processes, such as synthesis and/or repair of Fe-S clusters in biosynthetic enzymes. The sequence is that of Probable Fe(2+)-trafficking protein from Hamiltonella defensa subsp. Acyrthosiphon pisum (strain 5AT).